Here is a 71-residue protein sequence, read N- to C-terminus: uncharacterized protein (71 aa).

Residues 1–19 (MFLFPSLLSSFCITLRSIS) form the signal peptide.

This is an uncharacterized protein from Pasteurella multocida (strain Pm70).